The following is a 405-amino-acid chain: Probable tRNA sulfurtransferase (405 aa).

The region spanning 60–165 (DKIDQRLKLV…QDAIYISNQL (106 aa)) is the THUMP domain. ATP contacts are provided by residues 183–184 (ML), 208–209 (HF), Arg-265, Gly-287, and Gln-296.

Belongs to the ThiI family.

It localises to the cytoplasm. It carries out the reaction [ThiI sulfur-carrier protein]-S-sulfanyl-L-cysteine + a uridine in tRNA + 2 reduced [2Fe-2S]-[ferredoxin] + ATP + H(+) = [ThiI sulfur-carrier protein]-L-cysteine + a 4-thiouridine in tRNA + 2 oxidized [2Fe-2S]-[ferredoxin] + AMP + diphosphate. The catalysed reaction is [ThiS sulfur-carrier protein]-C-terminal Gly-Gly-AMP + S-sulfanyl-L-cysteinyl-[cysteine desulfurase] + AH2 = [ThiS sulfur-carrier protein]-C-terminal-Gly-aminoethanethioate + L-cysteinyl-[cysteine desulfurase] + A + AMP + 2 H(+). It functions in the pathway cofactor biosynthesis; thiamine diphosphate biosynthesis. In terms of biological role, catalyzes the ATP-dependent transfer of a sulfur to tRNA to produce 4-thiouridine in position 8 of tRNAs, which functions as a near-UV photosensor. Also catalyzes the transfer of sulfur to the sulfur carrier protein ThiS, forming ThiS-thiocarboxylate. This is a step in the synthesis of thiazole, in the thiamine biosynthesis pathway. The sulfur is donated as persulfide by IscS. This is Probable tRNA sulfurtransferase from Lactobacillus gasseri (strain ATCC 33323 / DSM 20243 / BCRC 14619 / CIP 102991 / JCM 1131 / KCTC 3163 / NCIMB 11718 / NCTC 13722 / AM63).